Consider the following 554-residue polypeptide: MRVAASTVLLGVASAASFQQQTQHVLSSGYERAQAGMKPLAEQFVDAAGKPIANIEEAFHGMTAEVKALWDEIKLLVPESAFNHSNWFTKPKPARRRHDWDHVVKGADVQKLWVQGESGEDHRQVDGKLADFNLRVKAVDPSKLGVDKVKQYSGYLDDEANDKHLFYWFFESRNDPKNDPVVLWLNGGPGCSSLTGLFLELGPSSIDKKLKVVNNEFSWNNNASVIFLDQPVNVGYSYSGNSVSNTIAAGKDVYALLSLFFHQFPEYAKQDFHIAGESYAGHYIPVFASEILSHKNRNINLKSILIGNGLTDGLTQYEHYRPMACGKGGYPAVLDESECRSMDNALPRCQSLIQNCYDSGSVWSCVPASIYCNNALIGPYQRTGQNVYDIRGKCEDSSNLCYSALGWISDYLNQQDVMDALGVEVSGYESCNFDINRNFLFQGDWMQPFHRLVPNILKEIPVLIYAGDADYICNWLGNQAWTEALEWPGKKNFNKASIKDLKLAGAEKEYGKVKASGNFTFMQVYQAGHMVPMDQPENSLDFLNRWLGGEWFAK.

The signal sequence occupies residues 1–17; it reads MRVAASTVLLGVASAAS. Positions 18–137 are excised as a propeptide; sequence FQQQTQHVLS…KLADFNLRVK (120 aa). 5 disulfide bridges follow: Cys-191/Cys-431, Cys-325/Cys-339, Cys-349/Cys-372, Cys-356/Cys-365, and Cys-394/Cys-401. N-linked (GlcNAc...) asparagine glycosylation is present at Asn-222. The active site involves Ser-278. Asp-470 is an active-site residue. Asn-518 carries an N-linked (GlcNAc...) asparagine glycan. Residue His-529 is part of the active site.

This sequence belongs to the peptidase S10 family.

Its subcellular location is the vacuole. The catalysed reaction is Release of a C-terminal amino acid with broad specificity.. Functionally, vacuolar carboxypeptidase involved in degradation of small peptides. Digests preferentially peptides containing an aliphatic or hydrophobic residue in P1' position, as well as methionine, leucine or phenylalanine in P1 position of ester substrate. This is Carboxypeptidase Y homolog A (CPYA) from Podospora anserina (strain S / ATCC MYA-4624 / DSM 980 / FGSC 10383) (Pleurage anserina).